A 213-amino-acid polypeptide reads, in one-letter code: Peroxynitrite isomerase 2 (213 aa).

Residues 58 to 64 (GVWRGEG) carry the GXWXGXG motif. Residues K176 and H203 each contribute to the heme b site.

Belongs to the nitrobindin family. As to quaternary structure, homodimer. Heme b serves as cofactor.

The enzyme catalyses peroxynitrite = nitrate. Its pathway is nitrogen metabolism. Its function is as follows. Heme-binding protein able to scavenge peroxynitrite and to protect free L-tyrosine against peroxynitrite-mediated nitration, by acting as a peroxynitrite isomerase that converts peroxynitrite to nitrate. Therefore, this protein likely plays a role in peroxynitrite sensing and in the detoxification of reactive nitrogen and oxygen species (RNS and ROS, respectively). Is able to bind nitric oxide (NO) in vitro, but may act as a sensor of peroxynitrite levels in vivo. The protein is Peroxynitrite isomerase 2 of Rhodococcus jostii (strain RHA1).